The sequence spans 547 residues: Oncoprotein-induced transcript 3 protein (547 aa).

The signal sequence occupies residues 1 to 19; the sequence is MPQLLLLACLLIIVTRVAP. Residues asparagine 89 and asparagine 116 are each glycosylated (N-linked (GlcNAc...) asparagine). Positions 182-222 constitute an EGF-like; calcium-binding domain; that stretch reads DENECEQNNGGCSEICVNLKNSYRCECGIGRVLRSDGKTCE. 3 cysteine pairs are disulfide-bonded: cysteine 186–cysteine 197, cysteine 193–cysteine 206, and cysteine 208–cysteine 221. The ZP domain occupies 267-516; it reads FCKSNTIEVS…SRCAQGCHRR (250 aa). An N-linked (GlcNAc...) asparagine glycan is attached at asparagine 299. The interval 520–547 is disordered; sequence EASTEGEDASGPRSQMLTGGPISIDWED.

The protein resides in the nucleus envelope. In terms of biological role, may be involved in hepatocellular function and development. The polypeptide is Oncoprotein-induced transcript 3 protein (OIT3) (Bos taurus (Bovine)).